We begin with the raw amino-acid sequence, 146 residues long: Cytochrome b5 type B (146 aa).

The propeptide occupies 1-11; that stretch reads MATPEASGSGE. Ser19 is modified (phosphoserine). The Cytochrome b5 heme-binding domain occupies 20-96; sequence VTYYRLEEVA…LKQYYIGDVH (77 aa). Lys30 carries the N6-acetyllysine modification. The residue at position 33 (Ser33) is a Phosphoserine. Heme-binding residues include His55 and His79. A Phosphoserine modification is found at Ser80. The helical transmembrane segment at 119–136 threads the bilayer; it reads WAYWFVPIVGAILIGFLY.

This sequence belongs to the cytochrome b5 family. Component of a complex composed of cytochrome b5, NADH-cytochrome b5 reductase (CYB5R3) and MTARC2.

The protein resides in the mitochondrion outer membrane. Its function is as follows. Cytochrome b5 is a membrane-bound hemoprotein functioning as an electron carrier for several membrane-bound oxygenases. The sequence is that of Cytochrome b5 type B (Cyb5b) from Mus musculus (Mouse).